A 122-amino-acid chain; its full sequence is Small ribosomal subunit protein uS13 (122 aa).

The tract at residues 97 to 122 (PVRGQRTKTNARTRKGPARTVAGKKK) is disordered.

It belongs to the universal ribosomal protein uS13 family. In terms of assembly, part of the 30S ribosomal subunit. Forms a loose heterodimer with protein S19. Forms two bridges to the 50S subunit in the 70S ribosome.

In terms of biological role, located at the top of the head of the 30S subunit, it contacts several helices of the 16S rRNA. In the 70S ribosome it contacts the 23S rRNA (bridge B1a) and protein L5 of the 50S subunit (bridge B1b), connecting the 2 subunits; these bridges are implicated in subunit movement. Contacts the tRNAs in the A and P-sites. In Geobacter sulfurreducens (strain ATCC 51573 / DSM 12127 / PCA), this protein is Small ribosomal subunit protein uS13.